The primary structure comprises 345 residues: Matrix protein (345 aa).

The tract at residues 148–185 (KKKSKAKSAEGPSASTEDIKDSDTKGNQDIGDNGDLNS) is disordered. A compositionally biased stretch (basic and acidic residues) spans 164–173 (EDIKDSDTKG).

The protein resides in the virion. This chain is Matrix protein (M2), found in Aphis (Hairy beggarticks).